We begin with the raw amino-acid sequence, 103 residues long: Small ribosomal subunit protein eS24 (103 aa).

The protein belongs to the eukaryotic ribosomal protein eS24 family.

This is Small ribosomal subunit protein eS24 from Methanococcus maripaludis (strain C6 / ATCC BAA-1332).